The following is a 445-amino-acid chain: Chromosomal replication initiator protein DnaA (445 aa).

Positions 1-69 are domain I, interacts with DnaA modulators; it reads MEKIWLEAQS…IEAISSLTNI (69 aa). Positions 69-108 are domain II; sequence IKYQVDFKITEKSQVEKKKVDLQATEKIENDSTRNVDFNT. Positions 109-325 are domain III, AAA+ region; the sequence is NLNPKYTFDS…GMLIRLGAYA (217 aa). Residues glycine 153, glycine 155, lysine 156, and threonine 157 each contribute to the ATP site. The segment at 326 to 445 is domain IV, binds dsDNA; that stretch reads SLTGSEISLN…VEKMKKELMS (120 aa).

This sequence belongs to the DnaA family. As to quaternary structure, oligomerizes as a right-handed, spiral filament on DNA at oriC.

It localises to the cytoplasm. Functionally, plays an essential role in the initiation and regulation of chromosomal replication. ATP-DnaA binds to the origin of replication (oriC) to initiate formation of the DNA replication initiation complex once per cell cycle. Binds the DnaA box (a 9 base pair repeat at the origin) and separates the double-stranded (ds)DNA. Forms a right-handed helical filament on oriC DNA; dsDNA binds to the exterior of the filament while single-stranded (ss)DNA is stabiized in the filament's interior. The ATP-DnaA-oriC complex binds and stabilizes one strand of the AT-rich DNA unwinding element (DUE), permitting loading of DNA polymerase. After initiation quickly degrades to an ADP-DnaA complex that is not apt for DNA replication. Binds acidic phospholipids. The sequence is that of Chromosomal replication initiator protein DnaA from Geotalea daltonii (strain DSM 22248 / JCM 15807 / FRC-32) (Geobacter daltonii).